A 205-amino-acid chain; its full sequence is Probable NAD(P)H dehydrogenase (quinone) FQR1-like 1 (205 aa).

Residues 5-192 form the Flavodoxin-like domain; that stretch reads VYIVYYSMYG…GQAFHQGKYI (188 aa). Residues 11-15, 112-165, and His-136 each bind FMN; these read SMYGH and IFYS…SPYG. Tyr-13 is an NAD(+) binding site.

The protein belongs to the WrbA family. It depends on FMN as a cofactor.

Its subcellular location is the cell membrane. The enzyme catalyses a quinone + NADH + H(+) = a quinol + NAD(+). It catalyses the reaction a quinone + NADPH + H(+) = a quinol + NADP(+). Catalyzes the transfer of electrons from NADH and NADPH to reduce quinone to the hydroquinone state. The sequence is that of Probable NAD(P)H dehydrogenase (quinone) FQR1-like 1 from Arabidopsis thaliana (Mouse-ear cress).